The sequence spans 307 residues: Homoserine kinase (307 aa).

An ATP-binding site is contributed by 91-101 (PLARGLGSSAA).

The protein belongs to the GHMP kinase family. Homoserine kinase subfamily.

Its subcellular location is the cytoplasm. It catalyses the reaction L-homoserine + ATP = O-phospho-L-homoserine + ADP + H(+). Its pathway is amino-acid biosynthesis; L-threonine biosynthesis; L-threonine from L-aspartate: step 4/5. Functionally, catalyzes the ATP-dependent phosphorylation of L-homoserine to L-homoserine phosphate. This is Homoserine kinase from Deinococcus radiodurans (strain ATCC 13939 / DSM 20539 / JCM 16871 / CCUG 27074 / LMG 4051 / NBRC 15346 / NCIMB 9279 / VKM B-1422 / R1).